A 194-amino-acid chain; its full sequence is Holliday junction branch migration complex subunit RuvA (194 aa).

Positions 1–61 are domain I; that stretch reads MIASLSGLLE…EDSVSLYGFA (61 aa). Residues 62–136 form a domain II region; that stretch reads SVLECTVFEQ…GKLTSVPLEN (75 aa). The flexible linker stretch occupies residues 136 to 140; the sequence is NRKQE. Positions 141–194 are domain III; sequence QAVDRSAEIVQALIGLGWQRQESAAAVESVLEKDQSLTMPEILRNALRYLAKQE.

This sequence belongs to the RuvA family. In terms of assembly, homotetramer. Forms an RuvA(8)-RuvB(12)-Holliday junction (HJ) complex. HJ DNA is sandwiched between 2 RuvA tetramers; dsDNA enters through RuvA and exits via RuvB. An RuvB hexamer assembles on each DNA strand where it exits the tetramer. Each RuvB hexamer is contacted by two RuvA subunits (via domain III) on 2 adjacent RuvB subunits; this complex drives branch migration. In the full resolvosome a probable DNA-RuvA(4)-RuvB(12)-RuvC(2) complex forms which resolves the HJ.

The protein resides in the cytoplasm. Its function is as follows. The RuvA-RuvB-RuvC complex processes Holliday junction (HJ) DNA during genetic recombination and DNA repair, while the RuvA-RuvB complex plays an important role in the rescue of blocked DNA replication forks via replication fork reversal (RFR). RuvA specifically binds to HJ cruciform DNA, conferring on it an open structure. The RuvB hexamer acts as an ATP-dependent pump, pulling dsDNA into and through the RuvAB complex. HJ branch migration allows RuvC to scan DNA until it finds its consensus sequence, where it cleaves and resolves the cruciform DNA. The protein is Holliday junction branch migration complex subunit RuvA of Tropheryma whipplei (strain Twist) (Whipple's bacillus).